The following is a 334-amino-acid chain: Ferredoxin--NADP reductase (334 aa).

FAD-binding residues include Asp33, Gln41, Tyr46, Ala86, Phe120, Asp286, and Thr327.

The protein belongs to the ferredoxin--NADP reductase type 2 family. In terms of assembly, homodimer. Requires FAD as cofactor.

The catalysed reaction is 2 reduced [2Fe-2S]-[ferredoxin] + NADP(+) + H(+) = 2 oxidized [2Fe-2S]-[ferredoxin] + NADPH. The sequence is that of Ferredoxin--NADP reductase from Rickettsia prowazekii (strain Madrid E).